The chain runs to 702 residues: Ribosomal RNA large subunit methyltransferase K/L (702 aa).

One can recognise a THUMP domain in the interval 43-154 (LVYQSLMWSR…KETASIALDL (112 aa)).

This sequence belongs to the methyltransferase superfamily. RlmKL family.

The protein localises to the cytoplasm. It catalyses the reaction guanosine(2445) in 23S rRNA + S-adenosyl-L-methionine = N(2)-methylguanosine(2445) in 23S rRNA + S-adenosyl-L-homocysteine + H(+). The enzyme catalyses guanosine(2069) in 23S rRNA + S-adenosyl-L-methionine = N(2)-methylguanosine(2069) in 23S rRNA + S-adenosyl-L-homocysteine + H(+). In terms of biological role, specifically methylates the guanine in position 2445 (m2G2445) and the guanine in position 2069 (m7G2069) of 23S rRNA. The protein is Ribosomal RNA large subunit methyltransferase K/L of Escherichia coli O1:K1 / APEC.